We begin with the raw amino-acid sequence, 391 residues long: MGEENQPNYTISQENWSLHRKGYDDQQRHQEKVQEAIKNNLPDLVTEESIVMSNGKDVVKIPIRSLDEYKIRYNYDKNKHVGQGNGDSKVGDVVARDGSGGQKQKGPGKGQGAGDAAGEDYYEAEVSILELEQAFFKELELPNLKRKEMDENRIEHVEFNDIRKTGLWGNIDKKRTMISAYKRNAMRGKASFHPIHQEDLKFRTWNEVLKPDSKAVVLAMMDTSGSMGIWEKYMARSFFFWMTRFLRTKYETVDIEFIAHHTEAKVVPEEEFFSKGESGGTICSSVYKKALELIDNKYSPDRYNIYPFHFSDGDNLTSDNARCVKLVEELMKKCNMFGYGEVNQYNRHSTLMSAYKNIKDENFRYYILKQKADVFHAMKSFFREEAGEKMA.

Residues 1–16 (MGEENQPNYTISQENW) show a composition bias toward polar residues. Disordered stretches follow at residues 1–31 (MGEE…RHQE) and 80–117 (HVGQ…GDAA). Basic and acidic residues predominate over residues 21–31 (KGYDDQQRHQE). Gly residues predominate over residues 98–115 (GSGGQKQKGPGKGQGAGD).

It belongs to the UPF0229 family.

In Bacillus cereus (strain 03BB102), this protein is UPF0229 protein BCA_0588.